The sequence spans 951 residues: Pentatricopeptide repeat-containing protein At4g19220, mitochondrial (951 aa).

A mitochondrion-targeting transit peptide spans 1–63; it reads MLLVMVRSST…RHFTSSVLSP (63 aa). PPR repeat units lie at residues 121–151, 152–186, 187–221, 222–252, 253–287, 288–322, 325–355, 356–386, 392–426, 428–458, 459–489, 496–530, 531–561, 563–597, 599–629, 634–668, 669–695, 697–731, 732–762, 763–793, 799–829, and 835–865; these read DLAT…LKEK, DVIV…GNEF, DSTT…GLVG, DSSL…MEHR, DIVS…GQEA, DTVT…GYSP, HVSV…LVCR, DVIS…MQSV, DIAT…EMQS, ALEV…TTHR, DLVS…VVSE, SLST…GFGD, NMLS…MSET, DLTS…GKIR, DLIT…AIKS, DTQL…NLCS, WNCV…LKLE, NEIT…GFQA, NPFV…SGVN, SISA…LSSN, NKSS…MEEK, and VTEH…IGEP. The tract at residues 870–945 is type E motif; sequence VWGALLSACN…LPGYSVIDVR (76 aa).

Belongs to the PPR family. PCMP-E subfamily.

The protein localises to the mitochondrion. This Arabidopsis thaliana (Mouse-ear cress) protein is Pentatricopeptide repeat-containing protein At4g19220, mitochondrial (PCMP-E2).